Consider the following 106-residue polypeptide: NADH-quinone oxidoreductase subunit K (106 aa).

Helical transmembrane passes span 8-28, 35-55, and 66-86; these read IGIE…VFGV, IIVF…FVAF, and VFVF…LAIL.

This sequence belongs to the complex I subunit 4L family. In terms of assembly, NDH-1 is composed of 14 different subunits. Subunits NuoA, H, J, K, L, M, N constitute the membrane sector of the complex.

The protein resides in the cell inner membrane. It catalyses the reaction a quinone + NADH + 5 H(+)(in) = a quinol + NAD(+) + 4 H(+)(out). Its function is as follows. NDH-1 shuttles electrons from NADH, via FMN and iron-sulfur (Fe-S) centers, to quinones in the respiratory chain. The immediate electron acceptor for the enzyme in this species is believed to be a menaquinone. Couples the redox reaction to proton translocation (for every two electrons transferred, four hydrogen ions are translocated across the cytoplasmic membrane), and thus conserves the redox energy in a proton gradient. This is NADH-quinone oxidoreductase subunit K from Flavobacterium johnsoniae (strain ATCC 17061 / DSM 2064 / JCM 8514 / BCRC 14874 / CCUG 350202 / NBRC 14942 / NCIMB 11054 / UW101) (Cytophaga johnsonae).